A 96-amino-acid polypeptide reads, in one-letter code: uncharacterized protein (96 aa).

It belongs to the mulikevirus gp14 protein family.

It is found in the host cytoplasm. This is an uncharacterized protein from Escherichia coli (Bacteriophage D108).